Consider the following 637-residue polypeptide: 1-deoxy-D-xylulose-5-phosphate synthase (637 aa).

Thiamine diphosphate-binding positions include His-75 and 116–118 (AHS). Residue Asp-147 coordinates Mg(2+). Residues 148 to 149 (GA), Asn-177, Tyr-288, and Glu-370 each bind thiamine diphosphate. Position 177 (Asn-177) interacts with Mg(2+).

The protein belongs to the transketolase family. DXPS subfamily. Homodimer. Mg(2+) is required as a cofactor. Requires thiamine diphosphate as cofactor.

The enzyme catalyses D-glyceraldehyde 3-phosphate + pyruvate + H(+) = 1-deoxy-D-xylulose 5-phosphate + CO2. It participates in metabolic intermediate biosynthesis; 1-deoxy-D-xylulose 5-phosphate biosynthesis; 1-deoxy-D-xylulose 5-phosphate from D-glyceraldehyde 3-phosphate and pyruvate: step 1/1. Functionally, catalyzes the acyloin condensation reaction between C atoms 2 and 3 of pyruvate and glyceraldehyde 3-phosphate to yield 1-deoxy-D-xylulose-5-phosphate (DXP). This Cupriavidus metallidurans (strain ATCC 43123 / DSM 2839 / NBRC 102507 / CH34) (Ralstonia metallidurans) protein is 1-deoxy-D-xylulose-5-phosphate synthase.